Consider the following 73-residue polypeptide: uncharacterized protein (73 aa).

This is an uncharacterized protein from Homo sapiens (Human).